The sequence spans 698 residues: tRNA (guanine(37)-N(1))-methyltransferase (698 aa).

The disordered stretch occupies residues 207–242 (SPPSVSLTENQDGDPQAQDSLRAVAAPPSPSSRKRG). S-adenosyl-L-methionine is bound by residues histidine 427, 465–466 (DL), 494–495 (DG), and asparagine 536.

Belongs to the class I-like SAM-binding methyltransferase superfamily. TRM5/TYW2 family. As to quaternary structure, monomer.

The protein resides in the mitochondrion matrix. The protein localises to the nucleus. Its subcellular location is the cytoplasm. It catalyses the reaction guanosine(37) in tRNA + S-adenosyl-L-methionine = N(1)-methylguanosine(37) in tRNA + S-adenosyl-L-homocysteine + H(+). In terms of biological role, specifically methylates the N1 position of guanosine-37 in various cytoplasmic and mitochondrial tRNAs. Methylation is not dependent on the nature of the nucleoside 5' of the target nucleoside. This is the first step in the biosynthesis of wybutosine (yW), a modified base adjacent to the anticodon of tRNAs and required for accurate decoding. The protein is tRNA (guanine(37)-N(1))-methyltransferase of Leishmania braziliensis.